A 515-amino-acid chain; its full sequence is Bifunctional purine biosynthesis protein PurH (515 aa).

One can recognise an MGS-like domain in the interval 1-145 (MTKRALISVS…KNHASVTVVV (145 aa)).

Belongs to the PurH family.

The enzyme catalyses (6R)-10-formyltetrahydrofolate + 5-amino-1-(5-phospho-beta-D-ribosyl)imidazole-4-carboxamide = 5-formamido-1-(5-phospho-D-ribosyl)imidazole-4-carboxamide + (6S)-5,6,7,8-tetrahydrofolate. The catalysed reaction is IMP + H2O = 5-formamido-1-(5-phospho-D-ribosyl)imidazole-4-carboxamide. It functions in the pathway purine metabolism; IMP biosynthesis via de novo pathway; 5-formamido-1-(5-phospho-D-ribosyl)imidazole-4-carboxamide from 5-amino-1-(5-phospho-D-ribosyl)imidazole-4-carboxamide (10-formyl THF route): step 1/1. It participates in purine metabolism; IMP biosynthesis via de novo pathway; IMP from 5-formamido-1-(5-phospho-D-ribosyl)imidazole-4-carboxamide: step 1/1. The sequence is that of Bifunctional purine biosynthesis protein PurH from Streptococcus agalactiae serotype Ia (strain ATCC 27591 / A909 / CDC SS700).